The chain runs to 511 residues: Maturase K (511 aa).

This sequence belongs to the intron maturase 2 family. MatK subfamily.

Its subcellular location is the plastid. The protein resides in the chloroplast. Its function is as follows. Usually encoded in the trnK tRNA gene intron. Probably assists in splicing its own and other chloroplast group II introns. The polypeptide is Maturase K (Paulownia tomentosa (Princess tree)).